The sequence spans 233 residues: Phosphoribosylformylglycinamidine synthase subunit PurQ (233 aa).

One can recognise a Glutamine amidotransferase type-1 domain in the interval 3–233 (SAVLVFPGIN…GLVAHLERAA (231 aa)). The Nucleophile role is filled by cysteine 87. Residues histidine 204 and glutamate 206 contribute to the active site.

In terms of assembly, part of the FGAM synthase complex composed of 1 PurL, 1 PurQ and 2 PurS subunits.

Its subcellular location is the cytoplasm. It catalyses the reaction N(2)-formyl-N(1)-(5-phospho-beta-D-ribosyl)glycinamide + L-glutamine + ATP + H2O = 2-formamido-N(1)-(5-O-phospho-beta-D-ribosyl)acetamidine + L-glutamate + ADP + phosphate + H(+). It carries out the reaction L-glutamine + H2O = L-glutamate + NH4(+). It functions in the pathway purine metabolism; IMP biosynthesis via de novo pathway; 5-amino-1-(5-phospho-D-ribosyl)imidazole from N(2)-formyl-N(1)-(5-phospho-D-ribosyl)glycinamide: step 1/2. Functionally, part of the phosphoribosylformylglycinamidine synthase complex involved in the purines biosynthetic pathway. Catalyzes the ATP-dependent conversion of formylglycinamide ribonucleotide (FGAR) and glutamine to yield formylglycinamidine ribonucleotide (FGAM) and glutamate. The FGAM synthase complex is composed of three subunits. PurQ produces an ammonia molecule by converting glutamine to glutamate. PurL transfers the ammonia molecule to FGAR to form FGAM in an ATP-dependent manner. PurS interacts with PurQ and PurL and is thought to assist in the transfer of the ammonia molecule from PurQ to PurL. This is Phosphoribosylformylglycinamidine synthase subunit PurQ from Nitrobacter winogradskyi (strain ATCC 25391 / DSM 10237 / CIP 104748 / NCIMB 11846 / Nb-255).